The primary structure comprises 452 residues: Methionine aminopeptidase 2 (452 aa).

Positions 1–96 (MAVQALPEIN…VPLSTLFPNN (96 aa)) are disordered. The segment covering 18–35 (GAANAAAKGQAAQGTAGN) has biased composition (low complexity). Residues 36 to 53 (DDAENDESDEDKEDEQEV) show a composition bias toward acidic residues. Positions 62 to 77 (GKKKKKKTKKKKKKGT) are enriched in basic residues. Histidine 202 serves as a coordination point for substrate. Aspartate 222, aspartate 233, and histidine 302 together coordinate a divalent metal cation. Histidine 310 is a binding site for substrate. Residues glutamate 338 and glutamate 433 each coordinate a divalent metal cation.

Belongs to the peptidase M24A family. Methionine aminopeptidase eukaryotic type 2 subfamily. Co(2+) serves as cofactor. The cofactor is Zn(2+). It depends on Mn(2+) as a cofactor. Fe(2+) is required as a cofactor.

It is found in the cytoplasm. The enzyme catalyses Release of N-terminal amino acids, preferentially methionine, from peptides and arylamides.. Cotranslationally removes the N-terminal methionine from nascent proteins. The N-terminal methionine is often cleaved when the second residue in the primary sequence is small and uncharged (Met-Ala-, Cys, Gly, Pro, Ser, Thr, or Val). In Coccidioides posadasii (strain C735) (Valley fever fungus), this protein is Methionine aminopeptidase 2.